A 33-amino-acid chain; its full sequence is Helofensin-1 (33 aa).

The protein belongs to the beta-defensin family. Helofensin subfamily. Expressed by the venom gland.

It localises to the secreted. In terms of biological role, lethal toxin which possesses an inhibitory effect on direct electrical stimulation of the isolated hemi-diaphragm. Neither hemorrhagic nor hemolytic activities are detected. Phospholipase A2 activity, proteolytic activity and arginine esterolytic activity are absent. This Heloderma horridum horridum (Mexican beaded lizard) protein is Helofensin-1.